The primary structure comprises 663 residues: Transmembrane 9 superfamily member 2 (663 aa).

Residues 1 to 28 (MSSRPPASLPARGPRLLLLSLLLLGTVP) form the signal peptide. Topologically, residues 29-300 (GPRPGSAFYL…LESMPHTHIQ (272 aa)) are lumenal. A helical membrane pass occupies residues 301–321 (WFSIMNSLVIVLFLSGMVAMI). Topologically, residues 322 to 374 (MLRTLHKDIARYNQMDSTEDAQEEFGWKLVHGDIFRPPRKGMLLSVFLGSGTQ) are cytoplasmic. A helical membrane pass occupies residues 375–395 (ILIMTFVTLFFACLGFLSPAN). At 396 to 398 (RGA) the chain is on the lumenal side. Residues 399–419 (LMTCAVVLWVLLGTPAGYVAA) form a helical membrane-spanning segment. The Cytoplasmic segment spans residues 420 to 437 (RFYKSFGGEKWKTNVLLT). Residues 438-458 (SFLCPGIVFADFFIMNLILWG) form a helical membrane-spanning segment. Residues 459-466 (EGSSAAIP) are Lumenal-facing. The helical transmembrane segment at 467 to 487 (FGTLVAILALWFCISVPLTFI) threads the bilayer. The Cytoplasmic segment spans residues 488–522 (GAYFGFKKNAIEHPVRTNQIPRQIPEQSFYTKPLP). Residues 523–543 (GIIMGGILPFGCIFIQLFFIL) traverse the membrane as a helical segment. The Lumenal segment spans residues 544-554 (NSIWSHQMYYM). The chain crosses the membrane as a helical span at residues 555–575 (FGFLFLVFIILVITCSEATIL). At 576–591 (LCYFHLCAEDYHWQWR) the chain is on the cytoplasmic side. The chain crosses the membrane as a helical span at residues 592–612 (SFLTSGFTAVYFLVYAIHYFF). Over 613–631 (SKLQITGTASTILYFGYTM) the chain is Lumenal. A helical membrane pass occupies residues 632-652 (IMVLIFFLFTGTIGFFACFWF). At 653–663 (VTKIYSVVKVD) the chain is on the cytoplasmic side.

It belongs to the nonaspanin (TM9SF) (TC 9.A.2) family.

The protein localises to the endosome membrane. Its subcellular location is the golgi outpost. The protein resides in the cytoplasm. It is found in the cytoskeleton. It localises to the microtubule organizing center. In the intracellular compartments, may function as a channel or small molecule transporter. This chain is Transmembrane 9 superfamily member 2 (Tm9sf2), found in Rattus norvegicus (Rat).